The chain runs to 603 residues: Replication protein A 70 kDa DNA-binding subunit (603 aa).

Positions 131–152 are disordered; that stretch reads PKPAVTSNSKPIAKKEPSHNNN. The residue at position 160 (S160) is a Phosphoserine. Residues 179-252 constitute a DNA-binding region (OB); it reads WVIKARVTSK…QLKPANKQYS (74 aa). S420 carries the phosphoserine modification. The C4-type zinc finger occupies 464-486; it reads CPQSDCNKKVVDEGNDQFRCEKC.

This sequence belongs to the replication factor A protein 1 family. In terms of assembly, component of the heterotrimeric canonical replication protein A complex (RPA).

It localises to the nucleus. Its function is as follows. As part of the heterotrimeric replication protein A complex (RPA/RP-A), binds and stabilizes single-stranded DNA intermediates, that form during DNA replication or upon DNA stress. It prevents their reannealing and in parallel, recruits and activates different proteins and complexes involved in DNA metabolism. Thereby, it plays an essential role both in DNA replication and the cellular response to DNA damage. This chain is Replication protein A 70 kDa DNA-binding subunit, found in Drosophila melanogaster (Fruit fly).